The primary structure comprises 51 residues: SPbeta prophage-derived uncharacterized protein YorQ (51 aa).

The polypeptide is SPbeta prophage-derived uncharacterized protein YorQ (yorQ) (Bacillus subtilis (strain 168)).